The following is a 321-amino-acid chain: Lipoyl synthase (321 aa).

7 residues coordinate [4Fe-4S] cluster: Cys-68, Cys-73, Cys-79, Cys-94, Cys-98, Cys-101, and Ser-308. The 218-residue stretch at 80–297 folds into the Radical SAM core domain; it reads FNHGTATFMI…KEQALAMGFT (218 aa).

The protein belongs to the radical SAM superfamily. Lipoyl synthase family. [4Fe-4S] cluster serves as cofactor.

It is found in the cytoplasm. It catalyses the reaction [[Fe-S] cluster scaffold protein carrying a second [4Fe-4S](2+) cluster] + N(6)-octanoyl-L-lysyl-[protein] + 2 oxidized [2Fe-2S]-[ferredoxin] + 2 S-adenosyl-L-methionine + 4 H(+) = [[Fe-S] cluster scaffold protein] + N(6)-[(R)-dihydrolipoyl]-L-lysyl-[protein] + 4 Fe(3+) + 2 hydrogen sulfide + 2 5'-deoxyadenosine + 2 L-methionine + 2 reduced [2Fe-2S]-[ferredoxin]. It functions in the pathway protein modification; protein lipoylation via endogenous pathway; protein N(6)-(lipoyl)lysine from octanoyl-[acyl-carrier-protein]: step 2/2. Functionally, catalyzes the radical-mediated insertion of two sulfur atoms into the C-6 and C-8 positions of the octanoyl moiety bound to the lipoyl domains of lipoate-dependent enzymes, thereby converting the octanoylated domains into lipoylated derivatives. The chain is Lipoyl synthase from Proteus mirabilis (strain HI4320).